A 286-amino-acid chain; its full sequence is ATP synthase gamma chain (286 aa).

The protein belongs to the ATPase gamma chain family. F-type ATPases have 2 components, CF(1) - the catalytic core - and CF(0) - the membrane proton channel. CF(1) has five subunits: alpha(3), beta(3), gamma(1), delta(1), epsilon(1). CF(0) has three main subunits: a, b and c.

The protein localises to the cell inner membrane. Its function is as follows. Produces ATP from ADP in the presence of a proton gradient across the membrane. The gamma chain is believed to be important in regulating ATPase activity and the flow of protons through the CF(0) complex. The chain is ATP synthase gamma chain from Shewanella sp. (strain ANA-3).